The primary structure comprises 270 residues: Endonuclease 4 (270 aa).

9 residues coordinate Zn(2+): His69, His108, Glu139, Asp169, His172, His204, Asp217, His219, and Glu248.

It belongs to the AP endonuclease 2 family. Zn(2+) is required as a cofactor.

It catalyses the reaction Endonucleolytic cleavage to 5'-phosphooligonucleotide end-products.. Its function is as follows. Endonuclease IV plays a role in DNA repair. It cleaves phosphodiester bonds at apurinic or apyrimidinic (AP) sites, generating a 3'-hydroxyl group and a 5'-terminal sugar phosphate. In addition, possesses a 3'-5' exonuclease activity. This chain is Endonuclease 4, found in Thermus thermophilus (strain ATCC BAA-163 / DSM 7039 / HB27).